The following is a 120-amino-acid chain: Internal scaffolding protein B (120 aa).

A compositionally biased stretch (polar residues) spans 1–23 (MEQLTKNQAVATSQEAVQNQNEP). The interval 1–64 (MEQLTKNQAV…PDIEAERKKR (64 aa)) is disordered. Composition is skewed to basic and acidic residues over residues 24-36 (QLRD…DKSV) and 48-64 (LRRD…RKKR).

It belongs to the microviridae B protein family. Component of the procapsid complex composed of 60 copies of the internally located B, 240 copies of the external scaffolding protein D, 60 copies of each of the viral structural proteins F and G proteins, and 12 copies of H. The proteolytic cleavage of the internal scaffolding protein B releases the scaffold protein in order to continue virion assembly.

The protein localises to the host cytoplasm. Functionally, participates in the assembly of the viral procapsid in the cytoplasm. Forms first a 12S pre-assembly complex with protein H, and F and G pentamers, then twelve 12S complexes are joined by the D protein to form the procapsid. Internal scaffold protein B is released from the procapsid upon genome packaging. Autoproteolytic activity cleaves protein B and probably facilitates its removal through the pores of the procapsid. In Enterobacteria phage phiX174 (Isolate Sanger), this protein is Internal scaffolding protein B (B).